Reading from the N-terminus, the 114-residue chain is T cell receptor beta variable 6-9 (114 aa).

A signal peptide spans 1–21 (MSIGLLCCVAFSLLWAGPVNA). Residues 22-114 (GVTQTPKFHI…TSVYFCASSY (93 aa)) form the Ig-like domain. Cysteine 42 and cysteine 110 are disulfide-bonded. A glycan (N-linked (GlcNAc...) asparagine) is linked at asparagine 84.

As to quaternary structure, alpha-beta TR is a heterodimer composed of an alpha and beta chain; disulfide-linked. The alpha-beta TR is associated with the transmembrane signaling CD3 coreceptor proteins to form the TR-CD3 (TcR or TCR). The assembly of alpha-beta TR heterodimers with CD3 occurs in the endoplasmic reticulum where a single alpha-beta TR heterodimer associates with one CD3D-CD3E heterodimer, one CD3G-CD3E heterodimer and one CD247 homodimer forming a stable octameric structure. CD3D-CD3E and CD3G-CD3E heterodimers preferentially associate with TR alpha and TR beta chains, respectively. The association of the CD247 homodimer is the last step of TcR assembly in the endoplasmic reticulum and is required for transport to the cell surface.

The protein resides in the cell membrane. In terms of biological role, v region of the variable domain of T cell receptor (TR) beta chain that participates in the antigen recognition. Alpha-beta T cell receptors are antigen specific receptors which are essential to the immune response and are present on the cell surface of T lymphocytes. Recognize peptide-major histocompatibility (MH) (pMH) complexes that are displayed by antigen presenting cells (APC), a prerequisite for efficient T cell adaptive immunity against pathogens. Binding of alpha-beta TR to pMH complex initiates TR-CD3 clustering on the cell surface and intracellular activation of LCK that phosphorylates the ITAM motifs of CD3G, CD3D, CD3E and CD247 enabling the recruitment of ZAP70. In turn ZAP70 phosphorylates LAT, which recruits numerous signaling molecules to form the LAT signalosome. The LAT signalosome propagates signal branching to three major signaling pathways, the calcium, the mitogen-activated protein kinase (MAPK) kinase and the nuclear factor NF-kappa-B (NF-kB) pathways, leading to the mobilization of transcription factors that are critical for gene expression and essential for T cell growth and differentiation. The T cell repertoire is generated in the thymus, by V-(D)-J rearrangement. This repertoire is then shaped by intrathymic selection events to generate a peripheral T cell pool of self-MH restricted, non-autoaggressive T cells. Post-thymic interaction of alpha-beta TR with the pMH complexes shapes TR structural and functional avidity. The protein is T cell receptor beta variable 6-9 of Homo sapiens (Human).